Reading from the N-terminus, the 203-residue chain is Putative 3-methyladenine DNA glycosylase (203 aa).

The protein belongs to the DNA glycosylase MPG family.

In Staphylococcus saprophyticus subsp. saprophyticus (strain ATCC 15305 / DSM 20229 / NCIMB 8711 / NCTC 7292 / S-41), this protein is Putative 3-methyladenine DNA glycosylase.